The chain runs to 81 residues: Arminin 2a (81 aa).

A signal peptide spans 1 to 18; the sequence is MKTVFAILFLAFIALTYA. Residues 19–57 constitute a propeptide that is removed on maturation; that stretch reads RSYEDVKEEIKNEVVKEILEDLEEESDELDDKSKEINDA. Alanine amide is present on A78.

This sequence belongs to the arminin family. Expressed in entodermal epithelium along the body column.

It is found in the secreted. The protein localises to the target cell membrane. Functionally, antimicrobial peptide with a broad-spectrum antimicrobial activity. Keeps its antibacterial activity under a wide range of salt concentrations that mimic physiological conditions of human blood, which is surprising, since Hydra is an obligate freshwater animal with nearly no salt tolerance. Does not affect red blood cells. This is Arminin 2a from Hydra vulgaris (Hydra).